Reading from the N-terminus, the 138-residue chain is Basic phospholipase A2 Drk-b1 (138 aa).

A signal peptide spans 1 to 16; the sequence is MRTLWIVAMCLIGVEG. 7 cysteine pairs are disulfide-bonded: C42–C131, C44–C60, C59–C111, C65–C138, C66–C104, C73–C97, and C91–C102. Residues Y43, G45, and G47 each contribute to the Ca(2+) site. The active site involves H63. D64 contacts Ca(2+). D105 is an active-site residue.

The cofactor is Ca(2+). In terms of tissue distribution, expressed by the venom gland.

Its subcellular location is the secreted. It carries out the reaction a 1,2-diacyl-sn-glycero-3-phosphocholine + H2O = a 1-acyl-sn-glycero-3-phosphocholine + a fatty acid + H(+). In terms of biological role, exhibits high hydrolytic activities and shows strong preference for the anionic micelles (dPPC with deoxycholate) to the zwitterionic micelles (dPPC with Triton X-100). PLA2 catalyzes the calcium-dependent hydrolysis of the 2-acyl groups in 3-sn-phosphoglycerides. The chain is Basic phospholipase A2 Drk-b1 from Daboia russelii (Russel's viper).